Reading from the N-terminus, the 253-residue chain is MRILLSNDDGYLAPGLAALYEALRPLAEVMVMAPEQNCSGASNSLTLSRPLSVSRSATTGFYYVNGTPTDSVHVALTGMLDAKPDLVVSGINNGQNMGDDTLYSGTVAAATEGIMFGVPAIAFSLVHKEWAHLEDAARVAAEIVRHYLDHPLPGQPLLNVNIPNLPYGELRGWRVTRLGKRHPSQPVIRQINPRGEPIYWIGAAGDALDASEGTDFHATAAGYVSITPLQLDLTHTQMLAATRDWAHAGSGAS.

The a divalent metal cation site is built by D8, D9, S39, and N92.

It belongs to the SurE nucleotidase family. A divalent metal cation serves as cofactor.

The protein resides in the cytoplasm. The enzyme catalyses a ribonucleoside 5'-phosphate + H2O = a ribonucleoside + phosphate. In terms of biological role, nucleotidase that shows phosphatase activity on nucleoside 5'-monophosphates. In Burkholderia thailandensis (strain ATCC 700388 / DSM 13276 / CCUG 48851 / CIP 106301 / E264), this protein is 5'-nucleotidase SurE.